A 62-amino-acid polypeptide reads, in one-letter code: Large ribosomal subunit protein bL32 (62 aa).

This sequence belongs to the bacterial ribosomal protein bL32 family.

The sequence is that of Large ribosomal subunit protein bL32 from Treponema denticola (strain ATCC 35405 / DSM 14222 / CIP 103919 / JCM 8153 / KCTC 15104).